A 66-amino-acid polypeptide reads, in one-letter code: Surface composition regulator (66 aa).

It belongs to the GlgS family.

Functionally, major determinant of cell surface composition. Negatively regulates motility, adhesion and synthesis of biofilm exopolysaccharides. In Escherichia coli O139:H28 (strain E24377A / ETEC), this protein is Surface composition regulator.